The sequence spans 143 residues: Sirohydrochlorin cobaltochelatase (143 aa).

Histidine 9 functions as the Proton acceptor in the catalytic mechanism. Histidine 9 serves as a coordination point for Co(2+). Ni(2+) is bound at residue histidine 9. Substrate contacts are provided by residues glutamate 45 and 70-75 (LAHGNH). Residue histidine 75 coordinates Co(2+). Histidine 75 contributes to the Ni(2+) binding site.

Belongs to the CbiX family. CbiXS subfamily. In terms of assembly, homotetramer; dimer of dimers.

It carries out the reaction Co-sirohydrochlorin + 2 H(+) = sirohydrochlorin + Co(2+). It catalyses the reaction Ni-sirohydrochlorin + 2 H(+) = sirohydrochlorin + Ni(2+). It participates in cofactor biosynthesis; adenosylcobalamin biosynthesis; cob(II)yrinate a,c-diamide from sirohydrochlorin (anaerobic route): step 1/10. Catalyzes the insertion of Co(2+) into sirohydrochlorin as part of the anaerobic pathway to cobalamin biosynthesis. Involved in the biosynthesis of the unique nickel-containing tetrapyrrole coenzyme F430, the prosthetic group of methyl-coenzyme M reductase (MCR), which plays a key role in methanogenesis and anaerobic methane oxidation. Catalyzes the insertion of Ni(2+) into sirohydrochlorin to yield Ni-sirohydrochlorin. This Methanococcus aeolicus (strain ATCC BAA-1280 / DSM 17508 / OCM 812 / Nankai-3) protein is Sirohydrochlorin cobaltochelatase.